An 843-amino-acid chain; its full sequence is Beta-mannosidase B (843 aa).

E430 functions as the Proton donor in the catalytic mechanism. N721 carries an N-linked (GlcNAc...) asparagine glycan.

It belongs to the glycosyl hydrolase 2 family. Beta-mannosidase B subfamily.

It catalyses the reaction Hydrolysis of terminal, non-reducing beta-D-mannose residues in beta-D-mannosides.. It functions in the pathway glycan metabolism; N-glycan degradation. Its function is as follows. Exoglycosidase that cleaves the single beta-linked mannose residue from the non-reducing end of beta-mannosidic oligosaccharides of various complexity and length. Prefers mannobiose over mannotriose and has no activity against polymeric mannan. Is also severely restricted by galactosyl substitutions at the +1 subsite. The protein is Beta-mannosidase B (mndB) of Aspergillus terreus (strain NIH 2624 / FGSC A1156).